The following is a 515-amino-acid chain: MATTLNPSEISELIKTRIEQVKLSAESRNEGTVTSVSDGIVRIFGLADAMQGEMIELPNKTYALALNLERDSVGAVVLGDYEHLREGDVAKTTGRILEVPVGKSLLGRVVNALGEPIDGKGTLGPTQTAPVERVAPGVIWRKSVDQPVQTGYKSVDAMIPIGRGQRELIIGDRQTGKTAMAIDTVISQKHTGIKCVYVAIGQKSSTIANIVRKLEENDALDHTIVVAATASESAALQYISAYAGCTMGEYFMDRGEDALIIYDDLSKQAVAYRQISLLLKRPPGREAYPGDVFYLHSRLLERAARVSEEYVEKFTQGEVKGKTGSLTALPIIETQAGDVSAFVPTNVISITDGQIFLETDLFNAGIRPAVNAGISVSRVGGSAQTKIIKKLSGGIRISLAQYRELAAFAQFASDLDETTRKQLERGQRVTELMKQKQYTSMSVANQALSIYAVSEGYLDDIPVHKVLTFEEGLHAHFSNTQGALIDKINNSGDWDNNIEAAFKQHIEEFKTTGSW.

171-178 is a binding site for ATP; the sequence is GDRQTGKT.

It belongs to the ATPase alpha/beta chains family. F-type ATPases have 2 components, CF(1) - the catalytic core - and CF(0) - the membrane proton channel. CF(1) has five subunits: alpha(3), beta(3), gamma(1), delta(1), epsilon(1). CF(0) has three main subunits: a(1), b(2) and c(9-12). The alpha and beta chains form an alternating ring which encloses part of the gamma chain. CF(1) is attached to CF(0) by a central stalk formed by the gamma and epsilon chains, while a peripheral stalk is formed by the delta and b chains.

It localises to the cell inner membrane. The catalysed reaction is ATP + H2O + 4 H(+)(in) = ADP + phosphate + 5 H(+)(out). In terms of biological role, produces ATP from ADP in the presence of a proton gradient across the membrane. The alpha chain is a regulatory subunit. In Xylella fastidiosa (strain Temecula1 / ATCC 700964), this protein is ATP synthase subunit alpha.